The chain runs to 227 residues: Cytochrome c oxidase subunit 2 (227 aa).

Residues M1–S14 are Mitochondrial intermembrane-facing. Residues P15–M45 traverse the membrane as a helical segment. The Mitochondrial matrix segment spans residues L46–Q59. Residues E60–M87 form a helical membrane-spanning segment. Topologically, residues D88–L227 are mitochondrial intermembrane. The Cu cation site is built by H161, C196, E198, C200, H204, and M207. Position 198 (E198) interacts with Mg(2+).

The protein belongs to the cytochrome c oxidase subunit 2 family. As to quaternary structure, component of the cytochrome c oxidase (complex IV, CIV), a multisubunit enzyme composed of 14 subunits. The complex is composed of a catalytic core of 3 subunits MT-CO1, MT-CO2 and MT-CO3, encoded in the mitochondrial DNA, and 11 supernumerary subunits COX4I, COX5A, COX5B, COX6A, COX6B, COX6C, COX7A, COX7B, COX7C, COX8 and NDUFA4, which are encoded in the nuclear genome. The complex exists as a monomer or a dimer and forms supercomplexes (SCs) in the inner mitochondrial membrane with NADH-ubiquinone oxidoreductase (complex I, CI) and ubiquinol-cytochrome c oxidoreductase (cytochrome b-c1 complex, complex III, CIII), resulting in different assemblies (supercomplex SCI(1)III(2)IV(1) and megacomplex MCI(2)III(2)IV(2)). Found in a complex with TMEM177, COA6, COX18, COX20, SCO1 and SCO2. Interacts with TMEM177 in a COX20-dependent manner. Interacts with COX20. Interacts with COX16. Cu cation is required as a cofactor.

The protein resides in the mitochondrion inner membrane. The catalysed reaction is 4 Fe(II)-[cytochrome c] + O2 + 8 H(+)(in) = 4 Fe(III)-[cytochrome c] + 2 H2O + 4 H(+)(out). Its function is as follows. Component of the cytochrome c oxidase, the last enzyme in the mitochondrial electron transport chain which drives oxidative phosphorylation. The respiratory chain contains 3 multisubunit complexes succinate dehydrogenase (complex II, CII), ubiquinol-cytochrome c oxidoreductase (cytochrome b-c1 complex, complex III, CIII) and cytochrome c oxidase (complex IV, CIV), that cooperate to transfer electrons derived from NADH and succinate to molecular oxygen, creating an electrochemical gradient over the inner membrane that drives transmembrane transport and the ATP synthase. Cytochrome c oxidase is the component of the respiratory chain that catalyzes the reduction of oxygen to water. Electrons originating from reduced cytochrome c in the intermembrane space (IMS) are transferred via the dinuclear copper A center (CU(A)) of subunit 2 and heme A of subunit 1 to the active site in subunit 1, a binuclear center (BNC) formed by heme A3 and copper B (CU(B)). The BNC reduces molecular oxygen to 2 water molecules using 4 electrons from cytochrome c in the IMS and 4 protons from the mitochondrial matrix. The protein is Cytochrome c oxidase subunit 2 (MT-CO2) of Lemur catta (Ring-tailed lemur).